The following is a 112-amino-acid chain: Large ribosomal subunit protein P1 (112 aa).

A disordered region spans residues 80–112 (AAAAPAAESKKEEKKKEEESDQSDDDMGFGLFD). Residues 87–97 (ESKKEEKKKEE) show a composition bias toward basic and acidic residues. A phosphoserine mark is found at serine 99 and serine 102.

The protein belongs to the eukaryotic ribosomal protein P1/P2 family. P1 and P2 exist as dimers at the large ribosomal subunit.

In terms of biological role, plays an important role in the elongation step of protein synthesis. This is Large ribosomal subunit protein P1 (RpLP1) from Drosophila melanogaster (Fruit fly).